Reading from the N-terminus, the 310-residue chain is tRNA pseudouridine synthase B (310 aa).

Catalysis depends on Asp-47, which acts as the Nucleophile.

The protein belongs to the pseudouridine synthase TruB family. Type 1 subfamily.

The catalysed reaction is uridine(55) in tRNA = pseudouridine(55) in tRNA. Its function is as follows. Responsible for synthesis of pseudouridine from uracil-55 in the psi GC loop of transfer RNAs. In Psychromonas ingrahamii (strain DSM 17664 / CCUG 51855 / 37), this protein is tRNA pseudouridine synthase B.